The following is a 318-amino-acid chain: MIDPTLRGAYRPGQLTVHHDPAVLGSVAKALRGVGRTVALVPTMGALHQGHLQIVRQAKRTNQVVIVSIFVNPLQFGAGEDLDKYPRTLDADVELLRAEGVELVFAPNAEQMYPDGPRTTVHPGPLGAELEGASRPTHFAGMLTVVAKLLQIARPHQAFFGEKDYQQLTLIRQMVRDLNFDVRIVAVPTVRESDGLALSSRNRYLDAAQRETALALSAALSAGAHAGGLGAEGVLAAARAVLDATPGLDLDYLELRSSTLGPAPASGNARLLVAAKVGTTRLIDNIAVTLGAPIDGHPNLDSQPEPAGTDPALLPPAR.

44-51 (MGALHQGH) contacts ATP. His51 acts as the Proton donor in catalysis. Gln75 lines the (R)-pantoate pocket. A beta-alanine-binding site is contributed by Gln75. 161 to 164 (GEKD) is an ATP binding site. Residue Gln167 participates in (R)-pantoate binding. ATP-binding positions include Val190 and 198 to 201 (LSSR). Positions 295–318 (DGHPNLDSQPEPAGTDPALLPPAR) are disordered.

Belongs to the pantothenate synthetase family. In terms of assembly, homodimer.

The protein resides in the cytoplasm. It carries out the reaction (R)-pantoate + beta-alanine + ATP = (R)-pantothenate + AMP + diphosphate + H(+). Its pathway is cofactor biosynthesis; (R)-pantothenate biosynthesis; (R)-pantothenate from (R)-pantoate and beta-alanine: step 1/1. Catalyzes the condensation of pantoate with beta-alanine in an ATP-dependent reaction via a pantoyl-adenylate intermediate. This is Pantothenate synthetase from Nocardia farcinica (strain IFM 10152).